We begin with the raw amino-acid sequence, 337 residues long: Inositol 2-dehydrogenase (337 aa).

Belongs to the Gfo/Idh/MocA family. As to quaternary structure, homotetramer.

The catalysed reaction is myo-inositol + NAD(+) = scyllo-inosose + NADH + H(+). Involved in the oxidation of myo-inositol (MI) to 2-keto-myo-inositol (2KMI or 2-inosose). The chain is Inositol 2-dehydrogenase from Gluconacetobacter diazotrophicus (strain ATCC 49037 / DSM 5601 / CCUG 37298 / CIP 103539 / LMG 7603 / PAl5).